A 78-amino-acid chain; its full sequence is UPF0349 protein GK2958 (78 aa).

The protein belongs to the UPF0349 family.

The protein is UPF0349 protein GK2958 of Geobacillus kaustophilus (strain HTA426).